The chain runs to 382 residues: Lactosylceramide 1,3-N-acetyl-beta-D-glucosaminyltransferase B (382 aa).

Residues M1 to H13 lie on the Cytoplasmic side of the membrane. The chain crosses the membrane as a helical; Signal-anchor for type II membrane protein span at residues L14 to W30. At E31 to T382 the chain is on the lumenal side. Residues N57, N112, N167, and N276 are each glycosylated (N-linked (GlcNAc...) asparagine).

This sequence belongs to the glycosyltransferase 31 family.

The protein resides in the golgi apparatus membrane. It carries out the reaction a beta-D-Gal-(1-&gt;4)-beta-D-Glc-(1&lt;-&gt;1)-Cer(d18:1(4E)) + UDP-N-acetyl-alpha-D-glucosamine = a beta-D-GlcNAc-(1-&gt;3)-beta-D-Gal-(1-&gt;4)-beta-D-Glc-(1&lt;-&gt;1)-Cer(d18:1(4E)) + UDP + H(+). The catalysed reaction is a neolactoside nLc4Cer(d18:1(4E)) + UDP-N-acetyl-alpha-D-glucosamine = a neolactoside IV(3)-beta-GlcNAc-nLc4Cer(d18:1(4E)) + UDP + H(+). Its pathway is protein modification; protein glycosylation. Its function is as follows. Beta-1,3-N-acetylglucosaminyltransferase that plays a key role in the synthesis of lacto- or neolacto-series carbohydrate chains on glycolipids. This is Lactosylceramide 1,3-N-acetyl-beta-D-glucosaminyltransferase B (b3gnt5b) from Danio rerio (Zebrafish).